Reading from the N-terminus, the 769-residue chain is Serine protease HtrA-like (769 aa).

Basic residues predominate over residues 1–20 (MDIGKKHVIPKSQYRRKRRE). Positions 1–390 (MDIGKKHVIP…ATSKLNKGRA (390 aa)) are disordered. Composition is skewed to basic and acidic residues over residues 21-64 (FFHN…ERFK) and 71-108 (LEQRNRDVNENKAEESKSNQDSKSAYNRDHYLTDDVSK). Positions 126–137 (YEQNSEATLSTK) are enriched in polar residues. The segment covering 138-186 (STDKVESTEMRKLSSDKNKVGHEEQHVLSKPSEHDKETRIDSESSRTDS) has biased composition (basic and acidic residues). Residues 247–262 (QQSQNEQTKTYTYGDS) are compositionally biased toward polar residues. 2 stretches are compositionally biased toward basic and acidic residues: residues 264–296 (QNDKSNHENDLSHHIPSISDDKDNVMRENHIVD) and 310–330 (KTDDDRKLDEKIHVEDKHKQN). The segment covering 331-347 (ADSSETVGYQSQSTASH) has biased composition (polar residues). Residues 348-364 (RSTEKRNISINDHDKLN) are compositionally biased toward basic and acidic residues. Residues 365–390 (GQKTNTKTSANNNQKKATSKLNKGRA) are compositionally biased toward polar residues. The helical transmembrane segment at 410 to 430 (LVILMGIIILIVILNAIFNNV) threads the bilayer. Catalysis depends on charge relay system residues H504, D534, and S619. Residues 680-733 (IASLNSFERQAVKLPGKVKNGVVVDQVDNNGLADQSGLKKGDVITELDGKLLED) enclose the PDZ domain.

Belongs to the peptidase S1C family.

Its subcellular location is the cell membrane. This Staphylococcus aureus (strain COL) protein is Serine protease HtrA-like.